Here is a 428-residue protein sequence, read N- to C-terminus: Enolase (428 aa).

Residue Gln163 coordinates (2R)-2-phosphoglycerate. Glu205 acts as the Proton donor in catalysis. The Mg(2+) site is built by Asp242, Glu285, and Asp312. Residues Lys337, Arg366, Ser367, and Lys388 each contribute to the (2R)-2-phosphoglycerate site. The active-site Proton acceptor is the Lys337.

It belongs to the enolase family. The cofactor is Mg(2+).

It localises to the cytoplasm. It is found in the secreted. The protein localises to the cell surface. The enzyme catalyses (2R)-2-phosphoglycerate = phosphoenolpyruvate + H2O. It functions in the pathway carbohydrate degradation; glycolysis; pyruvate from D-glyceraldehyde 3-phosphate: step 4/5. Catalyzes the reversible conversion of 2-phosphoglycerate (2-PG) into phosphoenolpyruvate (PEP). It is essential for the degradation of carbohydrates via glycolysis. This Nitrosomonas europaea (strain ATCC 19718 / CIP 103999 / KCTC 2705 / NBRC 14298) protein is Enolase.